Here is a 585-residue protein sequence, read N- to C-terminus: Proline-rich protein 14 (585 aa).

M1 carries the post-translational modification N-acetylmethionine. The segment at 1–135 (MDLPGDSSPP…TLRRRSRTTP (135 aa)) is sufficient for heterochromatin association in interphase and chromatin association in anaphase. 3 disordered regions span residues 23–46 (ALWGARSPKRPRLQLPGAPSPLEK), 73–150 (TSIP…RAPQ), and 189–241 (IVRQ…RPRL). Residues 85-378 (PVHRQPPASP…MARAPPPPRP (294 aa)) are required for the interaction with GRB2 and sufficient to promote the phosphorylation of AKT and cell proliferation. The segment covering 119 to 132 (RIHRTSSTLRRRSR) has biased composition (basic residues). Residues 136–365 (GPEEGPSQKV…RPRPRRHTVG (230 aa)) are required for nuclear lamina association. The segment covering 193-205 (PTPPPGDLEPPFQ) has biased composition (pro residues). Position 277 is a phosphoserine (S277). 2 disordered regions span residues 290–445 (EAEQ…KVSR) and 525–557 (DSSLPRSRRPSRGVRAAGGRTVPPNVAPSPDVG). Over residues 337–356 (LGPPGPGTCTWPPAPPQPSR) the composition is skewed to pro residues. Low complexity predominate over residues 393–409 (SPSLTTSCSSTASTSFS). A required for nuclear localization region spans residues 518–535 (RRAVEFRDSSLPRSRRPS).

In terms of assembly, interacts (via proline-rich region) with GRB2 (via SH3 domain 2). Interacts (via N-terminus) with CBX5.

It localises to the chromosome. It is found in the nucleus. The protein localises to the nucleus lamina. The protein resides in the nucleoplasm. Functions in tethering peripheral heterochromatin to the nuclear lamina during interphase, possibly through the interaction with heterochromatin protein CBX5/HP1 alpha. Might play a role in reattaching heterochromatin to the nuclear lamina at mitotic exit. Promotes myoblast differentiation during skeletal myogenesis, possibly by stimulating transcription factor MyoD activity via binding to CBX5/HP1 alpha. Involved in the positive regulation of the PI3K-Akt-mTOR signaling pathway and in promoting cell proliferation, possibly via binding to GRB2. The chain is Proline-rich protein 14 (PRR14) from Homo sapiens (Human).